The following is a 237-amino-acid chain: Phosphoribosylaminoimidazole-succinocarboxamide synthase (237 aa).

The protein belongs to the SAICAR synthetase family.

It catalyses the reaction 5-amino-1-(5-phospho-D-ribosyl)imidazole-4-carboxylate + L-aspartate + ATP = (2S)-2-[5-amino-1-(5-phospho-beta-D-ribosyl)imidazole-4-carboxamido]succinate + ADP + phosphate + 2 H(+). The protein operates within purine metabolism; IMP biosynthesis via de novo pathway; 5-amino-1-(5-phospho-D-ribosyl)imidazole-4-carboxamide from 5-amino-1-(5-phospho-D-ribosyl)imidazole-4-carboxylate: step 1/2. The chain is Phosphoribosylaminoimidazole-succinocarboxamide synthase from Cronobacter sakazakii (strain ATCC BAA-894) (Enterobacter sakazakii).